We begin with the raw amino-acid sequence, 349 residues long: Leucine-rich repeat-containing protein 58 (349 aa).

LRR repeat units lie at residues 14–34 (NLTH…NKRK), 35–56 (DVQQ…VNSF), 58–80 (HLHL…LGLT), 81–102 (KLKT…KELG), 105–125 (RLEV…QFLQ), 128–149 (TLKS…IENL), 151–173 (SLEF…ANLP), 174–195 (YLSY…LAQV), 197–217 (SLRS…ILSL), and 219–239 (QLQE…RDLT).

The protein is Leucine-rich repeat-containing protein 58 (lrrc58) of Xenopus tropicalis (Western clawed frog).